The sequence spans 775 residues: 5-methyltetrahydropteroyltriglutamate--homocysteine methyltransferase (775 aa).

5-methyltetrahydropteroyltri-L-glutamate is bound by residues 16 to 19 (REMK) and lysine 115. L-homocysteine contacts are provided by residues 435–437 (IGS) and glutamate 488. L-methionine-binding positions include 435–437 (IGS) and glutamate 488. 5-methyltetrahydropteroyltri-L-glutamate is bound by residues 519-520 (RC) and tryptophan 565. Aspartate 603 is a binding site for L-homocysteine. Aspartate 603 serves as a coordination point for L-methionine. Glutamate 609 lines the 5-methyltetrahydropteroyltri-L-glutamate pocket. Zn(2+) contacts are provided by histidine 645, cysteine 647, and glutamate 669. Residue histidine 698 is the Proton donor of the active site. Cysteine 730 is a Zn(2+) binding site.

It belongs to the vitamin-B12 independent methionine synthase family. Zn(2+) serves as cofactor.

It carries out the reaction 5-methyltetrahydropteroyltri-L-glutamate + L-homocysteine = tetrahydropteroyltri-L-glutamate + L-methionine. The protein operates within amino-acid biosynthesis; L-methionine biosynthesis via de novo pathway; L-methionine from L-homocysteine (MetE route): step 1/1. In terms of biological role, catalyzes the transfer of a methyl group from 5-methyltetrahydrofolate to homocysteine resulting in methionine formation. This is 5-methyltetrahydropteroyltriglutamate--homocysteine methyltransferase from Coxiella burnetii (strain RSA 331 / Henzerling II).